Consider the following 333-residue polypeptide: Fibronectin type III domain-containing protein 11 (333 aa).

Residues 212 to 310 (PVMFDRKESV…DSLTLHTRPG (99 aa)) enclose the Fibronectin type-III domain. The interval 307–333 (TRPGPPEGLAPSRLGKLGLSLTTPSER) is disordered.

The protein is Fibronectin type III domain-containing protein 11 of Bos taurus (Bovine).